A 253-amino-acid chain; its full sequence is Glucosamine-6-phosphate deaminase (253 aa).

Asp-65 serves as the catalytic Proton acceptor; for enolization step. Asn-133 functions as the For ring-opening step in the catalytic mechanism. His-135 (proton acceptor; for ring-opening step) is an active-site residue. Glu-140 serves as the catalytic For ring-opening step.

The protein belongs to the glucosamine/galactosamine-6-phosphate isomerase family. NagB subfamily.

It catalyses the reaction alpha-D-glucosamine 6-phosphate + H2O = beta-D-fructose 6-phosphate + NH4(+). Its pathway is amino-sugar metabolism; N-acetylneuraminate degradation; D-fructose 6-phosphate from N-acetylneuraminate: step 5/5. Catalyzes the reversible isomerization-deamination of glucosamine 6-phosphate (GlcN6P) to form fructose 6-phosphate (Fru6P) and ammonium ion. This chain is Glucosamine-6-phosphate deaminase, found in Corynebacterium glutamicum (strain ATCC 13032 / DSM 20300 / JCM 1318 / BCRC 11384 / CCUG 27702 / LMG 3730 / NBRC 12168 / NCIMB 10025 / NRRL B-2784 / 534).